Reading from the N-terminus, the 142-residue chain is Transcription antitermination protein NusB (142 aa).

The protein belongs to the NusB family.

Its function is as follows. Involved in transcription antitermination. Required for transcription of ribosomal RNA (rRNA) genes. Binds specifically to the boxA antiterminator sequence of the ribosomal RNA (rrn) operons. The chain is Transcription antitermination protein NusB from Borrelia garinii subsp. bavariensis (strain ATCC BAA-2496 / DSM 23469 / PBi) (Borreliella bavariensis).